The chain runs to 543 residues: Chaperonin GroEL 1 (543 aa).

Residues threonine 30–proline 33, lysine 51, aspartate 87–threonine 91, glycine 415, and aspartate 496 contribute to the ATP site.

It belongs to the chaperonin (HSP60) family. As to quaternary structure, forms a cylinder of 14 subunits composed of two heptameric rings stacked back-to-back. Interacts with the co-chaperonin GroES.

Its subcellular location is the cytoplasm. The catalysed reaction is ATP + H2O + a folded polypeptide = ADP + phosphate + an unfolded polypeptide.. Together with its co-chaperonin GroES, plays an essential role in assisting protein folding. The GroEL-GroES system forms a nano-cage that allows encapsulation of the non-native substrate proteins and provides a physical environment optimized to promote and accelerate protein folding. This is Chaperonin GroEL 1 from Roseobacter denitrificans (strain ATCC 33942 / OCh 114) (Erythrobacter sp. (strain OCh 114)).